Here is a 304-residue protein sequence, read N- to C-terminus: Flagellin (304 aa).

This sequence belongs to the bacterial flagellin family. Interacts with FliW in a 1:1 complex. Forms a 3-way complex of Hag, FliS and FliW, in which Flis and FliW do not directly interact.

It localises to the secreted. Its subcellular location is the bacterial flagellum. The protein localises to the cell wall. In terms of biological role, flagellin is the subunit which polymerizes to form the filaments of bacterial flagella. Assembly into flagella requires FliW. Acts as a homeostatic autoinhibitory regulator to control its own cytoplasmic levels. Partner switching by flagellin between FliW and CsrA provides a flagellar assembly checkpoint to tightly control the timing of flagellin synthesis. Flagellin binds to assembly factor FliW, freeing translation regulator CsrA to repress translation of the flagellin mRNA. When the flagellar hook is assembled flagellin is secreted, depleting intracellular flagellin, which frees FliW to interact with CsrA. This derepresses flagellin translation and provides protein for flagellar assembly. Once the flagellar filament is completed cytoplasmic flagellin levels rise and CsrA translation repression of flagellin reinitiates. This Bacillus subtilis (strain 168) protein is Flagellin.